Here is a 389-residue protein sequence, read N- to C-terminus: Probable serine/threonine-protein kinase PBL11 (389 aa).

Gly2 carries N-myristoyl glycine lipidation. Cys4 carries the S-palmitoyl cysteine lipid modification. Positions 68-353 (FRPDSVVGEG…NEIVKTMEEL (286 aa)) constitute a Protein kinase domain. ATP is bound by residues 74–82 (VGEGGFGCV) and Lys106. Residue Tyr151 is modified to Phosphotyrosine. Asp203 acts as the Proton acceptor in catalysis. Phosphoserine occurs at positions 207 and 237. Phosphothreonine is present on residues Thr238 and Thr243. Tyr251 bears the Phosphotyrosine mark.

The protein belongs to the protein kinase superfamily. Ser/Thr protein kinase family. As to expression, roots, leaves and stems.

Its subcellular location is the cell membrane. The enzyme catalyses L-seryl-[protein] + ATP = O-phospho-L-seryl-[protein] + ADP + H(+). The catalysed reaction is L-threonyl-[protein] + ATP = O-phospho-L-threonyl-[protein] + ADP + H(+). May play a role in the regulation of plant growth and development. May be involved in plant defense signaling. The chain is Probable serine/threonine-protein kinase PBL11 from Arabidopsis thaliana (Mouse-ear cress).